We begin with the raw amino-acid sequence, 129 residues long: Small ribosomal subunit protein uS11 (129 aa).

It belongs to the universal ribosomal protein uS11 family. As to quaternary structure, part of the 30S ribosomal subunit. Interacts with proteins S7 and S18. Binds to IF-3.

Located on the platform of the 30S subunit, it bridges several disparate RNA helices of the 16S rRNA. Forms part of the Shine-Dalgarno cleft in the 70S ribosome. The chain is Small ribosomal subunit protein uS11 from Hamiltonella defensa subsp. Acyrthosiphon pisum (strain 5AT).